Here is a 110-residue protein sequence, read N- to C-terminus: Methionine-R-sulfoxide reductase B1-A (110 aa).

Residues 1–104 (MSFCSFSGGE…FSSSLKFIPK (104 aa)) form the MsrB domain. Zn(2+) contacts are provided by cysteine 23, cysteine 26, cysteine 69, and cysteine 72. Catalysis depends on selenocysteine 93, which acts as the Nucleophile. A non-standard amino acid (selenocysteine) is located at residue selenocysteine 93.

It belongs to the MsrB Met sulfoxide reductase family. The cofactor is Zn(2+). In the embryo, expressed in the polster, paraxial mesoderm, tectum, otic vesicle and liver.

Its subcellular location is the cytoplasm. The protein resides in the nucleus. It is found in the cytoskeleton. It carries out the reaction L-methionyl-[protein] + [thioredoxin]-disulfide + H2O = L-methionyl-(R)-S-oxide-[protein] + [thioredoxin]-dithiol. The enzyme catalyses [thioredoxin]-disulfide + L-methionine + H2O = L-methionine (R)-S-oxide + [thioredoxin]-dithiol. Functionally, methionine-sulfoxide reductase that specifically reduces methionine (R)-sulfoxide back to methionine. While in many cases, methionine oxidation is the result of random oxidation following oxidative stress, methionine oxidation is also a post-translational modification that takes place on specific residue. Acts as a regulator of actin assembly by reducing methionine (R)-sulfoxide mediated by MICALs (mical1, mical2 or mical3) on actin, thereby promoting filament repolymerization. Plays a role in innate immunity by reducing oxidized actin, leading to actin repolymerization in macrophages. The protein is Methionine-R-sulfoxide reductase B1-A (msrb1) of Danio rerio (Zebrafish).